A 302-amino-acid chain; its full sequence is Rhomboid-related protein 2 (302 aa).

The segment at 1-38 (MAVAHEMEMESVNLNMEREGKEEPEEEKMKGNGEGKDF) is disordered. A compositionally biased stretch (basic and acidic residues) spans 16–38 (MEREGKEEPEEEKMKGNGEGKDF). 7 consecutive transmembrane segments (helical) span residues 71–91 (PLFI…YAVW), 127–147 (LVHA…VLGI), 158–178 (VGLV…IFDP), 182–202 (LVGA…NVIV), 211–231 (FGIV…GFAL), 244–264 (VSFA…YTVF), and 277–297 (FWIA…FNIF). Catalysis depends on Ser186, which acts as the Nucleophile. Residue His249 is part of the active site.

It belongs to the peptidase S54 family. Proteolytic processing of the proenzyme produces an N- and a C-terminal fragment. The processing is required for activation of the protease.

It localises to the cell membrane. It carries out the reaction Cleaves type-1 transmembrane domains using a catalytic dyad composed of serine and histidine that are contributed by different transmembrane domains.. In terms of biological role, involved in regulated intramembrane proteolysis and the subsequent release of functional polypeptides from their membrane anchors. Known substrate: EFNB3. The protein is Rhomboid-related protein 2 (Rhbdl2) of Mus musculus (Mouse).